The primary structure comprises 450 residues: E3 ubiquitin-protein ligase XB3 (450 aa).

ANK repeat units follow at residues 11–40 (GDEH…SLAR), 46–75 (DRLS…PPDA), 79–108 (HKQT…NILM), 113–142 (HART…TTPV), 158–187 (HGAT…IVSA), and 195–225 (PGST…RLQR). The tract at residues 291–312 (ILNGTKYSLPSPSPGDDSADDD) is disordered. Residues 323–372 (CCICFDQACTIEVQDCGHQMCAPCTLALCCHNKPNPTTLTPPSPACPFCR) form an RING-type zinc finger. The interval 385–450 (SACDPDKPSS…SNLDKPEHDL (66 aa)) is disordered.

As to quaternary structure, interacts (via ankyrin repeats) with XA21. Post-translationally, phosphorylated by XA21.

It catalyses the reaction S-ubiquitinyl-[E2 ubiquitin-conjugating enzyme]-L-cysteine + [acceptor protein]-L-lysine = [E2 ubiquitin-conjugating enzyme]-L-cysteine + N(6)-ubiquitinyl-[acceptor protein]-L-lysine.. It functions in the pathway protein modification; protein ubiquitination. E3 ubiquitin-protein ligase required for full accumulation of the LRR receptor kinase XA21 and XA21-mediated disease resistance. Binding to XA21 may stabilize the receptor kinase and maintain its protein level. Autoubiquitinated in vitro. This is E3 ubiquitin-protein ligase XB3 (XB3) from Oryza sativa subsp. japonica (Rice).